Here is a 1538-residue protein sequence, read N- to C-terminus: MVRECFTFLNIFVLHSIGSHVWFEDPEVAWIDGEVEKINGQEVVIQATTGKKVTAKLSKIYPKDVEAPAGGVDDMTKLSYLHEPGVLQNLKIRYELNEIYTYTGNILIAINPFQRLPHIYDAHMMQQYKGAPLGELSPHVFAVADVAYRAMINEGKSNSILVSGESGAGKTETTKMLMRYLAYLGGRAVTEGRTVEQQVLESNPVLEAFGNAKTVRNNNSSRFGKFVEIQFDKQGRISGAAIRTYLLERSRVCQISDPERNYHCFYLLCAAPQEEIEKYKLGHPKTFHYLNQSKCFELVGISDAHDYLATRRAMDIVGISEKEQEAIFRVVAAILHIGNIDFTKGKEVDSSVPKDEKSKFHLKTAAELLMCDLKALEDALCKRVMITPEEVIKRSLDPQSAVTSRDGLAKTVYSRLFDWLVDKINKSIGQDANSRSLIGVLDIYGFESFKTNSFEQFCINFTNEKLQQHFNQHVFKMEQEEYTKEAIDWSYIEFVDNQDVLDLIEKKPGGIVALLDEACMFPKSTHETFANKLYQTFKTHKRFIKPKLSRTDFAVAHYAGEVLYQSELFLDKNKDYVIPEHQDLLGASKCPFVVGLFPPLPEETSKSSKFSSIGSRFKLQLQQLMETLNCTEPHYIRCVKPNNLLKPAIFENVNIMQQLRCGGVLEAIRISCAGYPTRKPFFEFINRFGLLSPAALEGNFDEKVACQKILDNMGLKGYQIGKTKVFLRAGQMAELDARRAEVLSSAAKKIQRRIRTHQAQKRFIVLRKATISLQAICRGRLSCKHYDNLRREAAAVKIQKNGRRHYSRKSYKKLHVASLVVQTGLRAMAARKQFRFRKQTKAATIVQAQWRCHRAISYYKKLKNGVVLSQTRWRGRLAKRELRKLKMAARETGALKEAKDMLEKKVEELTYRVQLEKRSRGDLEEAKTQEILKLKSSFEEMRKKVDETNALLLKEREAAKKAAEEAPPVIKETQILVEDTKKIELMTEELESVKVTLENEKQRADDAVRKFEEAQESLEDKKKKLEETEKKGQQLQESLTRMEEKCSNLESENKVLRQQAVSMAPNKFLSGRSRSILQRGSESGHLAVDARSNLDLHSHSINHRDPSEVEDKPQKSLNEKQQENQDLLIRSIVQHLGFQGNRPITACIIYKCLLQWRSFEVERTSVFDRIIQTIGHAIETQDNNNTLAYWLSNTSTLLLLLQRTLKASGAAGMAPQRRRSSSATLFGRMSQSFRGAPPGVNLAMINGAAGGGADTFRQVEAKYPALLFKQQLTAYVEKIYGMIRDNLKKEISPLLGLCIQAPRTSRASLVKGASRSVGNTAAQQALIAHWQGIVKSLTNFLNTLKSNNVPSFLVRKVFTQIFSFINVQLFNSLLLRRECCSFSNGEYVKAGLSELEHWCFKATNEYAGSSWDELKHIRQAIGFLVVHQKPKKTLDEISHDLCPVLSIQQLYRISTMYWDDKYGTHSVSPDVIANMRVLMTEDSNNAVSNSFLLDDDSSIPFSVDDLSKSMEKFEIADIEPPPLIRENSGFSFLLPVSE.

In terms of domain architecture, Myosin N-terminal SH3-like spans 16–65 (SIGSHVWFEDPEVAWIDGEVEKINGQEVVIQATTGKKVTAKLSKIYPKDV). One can recognise a Myosin motor domain in the interval 70 to 740 (GGVDDMTKLS…QMAELDARRA (671 aa)). ATP is bound by residues 164–171 (GESGAGKT) and 217–225 (NNNSSRFGK). Actin-binding regions lie at residues 503-537 (LIEK…YQTF), 539-562 (THKR…AGEV), 597-621 (FPPL…KLQL), and 621-643 (LQQL…KPNN). IQ domains lie at 743–772 (LSSA…ATIS), 766–795 (LRKA…EAAA), 791–820 (REAA…ASLV), 814–843 (LHVA…TKAA), 839–868 (QTKA…GVVL), and 862–891 (LKNG…AARE). The stretch at 892 to 1064 (TGALKEAKDM…VLRQQAVSMA (173 aa)) forms a coiled coil. Positions 1017–1032 (SLEDKKKKLEETEKKG) are enriched in basic and acidic residues. Disordered regions lie at residues 1017 to 1041 (SLED…SLTR) and 1098 to 1121 (SHSI…NEKQ). The Dilute domain occupies 1168-1481 (DRIIQTIGHA…IANMRVLMTE (314 aa)).

This sequence belongs to the TRAFAC class myosin-kinesin ATPase superfamily. Myosin family. Plant myosin class XI subfamily. As to quaternary structure, homodimer.

In terms of biological role, myosin heavy chain that is required for the cell cycle-regulated transport of various organelles and proteins for their segregation. Functions by binding with its tail domain to receptor proteins on organelles and exerting force with its N-terminal motor domain against actin filaments, thereby transporting its cargo along polarized actin cables. Involved in trafficking of Golgi stacks and mitochondria. In Arabidopsis thaliana (Mouse-ear cress), this protein is Myosin-9 (XI-C).